Consider the following 359-residue polypeptide: MTTDLTDRRRLILKLAIQEFIESSQPVASDLLVRKYRLNVSPATVRNELAALEELGYLTHLHTSAGRVPTDAGYRYFVENLMDRTPLSATEQRTIRHQFYQVRSELDQWIQLAGAVLARTAQNASVVTPPRAQQARLKHLELIAIHETTALMVLVLHDGTIRQQTLTLDVAMTQEELSRCAAQINERCCDAPVERIEEVLKQERAQEPPGGNALVCQVLDLVVKAMHQFNEHISSDIHSDGLIEILNQPEFSRVERVRRMVEILQSGRALGTLIPRALSSSGVQVVIGGEHSYDEMREYSVVLSRYGGGEIVGVLGVIGPTRMAYPRAISAVRYISAVMSDLLAELYGIEGANRLNSEP.

Belongs to the HrcA family.

Its function is as follows. Negative regulator of class I heat shock genes (grpE-dnaK-dnaJ and groELS operons). Prevents heat-shock induction of these operons. This Roseiflexus sp. (strain RS-1) protein is Heat-inducible transcription repressor HrcA.